We begin with the raw amino-acid sequence, 1407 residues long: DNA-directed RNA polymerase subunit beta' (1407 aa).

Zn(2+)-binding residues include C70, C72, C85, and C88. Residues D460, D462, and D464 each coordinate Mg(2+). Residues C814, C888, C895, and C898 each coordinate Zn(2+).

This sequence belongs to the RNA polymerase beta' chain family. The RNAP catalytic core consists of 2 alpha, 1 beta, 1 beta' and 1 omega subunit. When a sigma factor is associated with the core the holoenzyme is formed, which can initiate transcription. It depends on Mg(2+) as a cofactor. Zn(2+) is required as a cofactor.

It carries out the reaction RNA(n) + a ribonucleoside 5'-triphosphate = RNA(n+1) + diphosphate. Its function is as follows. DNA-dependent RNA polymerase catalyzes the transcription of DNA into RNA using the four ribonucleoside triphosphates as substrates. This chain is DNA-directed RNA polymerase subunit beta', found in Salmonella paratyphi B (strain ATCC BAA-1250 / SPB7).